Reading from the N-terminus, the 988-residue chain is Echinoderm microtubule-associated protein-like 4 (988 aa).

Residue Met-1 is modified to N-acetylmethionine. The tract at residues 1–260 is microtubule-binding; it reads MDGFAGSLDD…IPSDVDNYDD (260 aa). A phosphoserine mark is found at Ser-7, Ser-13, Ser-16, Ser-61, and Ser-79. Residues 14–63 are a coiled coil; sequence AASTSDVQDRLSALESRVQQQEDEITVLKAALADVLRRLAISEDHVASVK. Thr-96 is subject to Phosphothreonine. The disordered stretch occupies residues 106–194; the sequence is TLSSAAKSGT…WENSDDSRNK (89 aa). Residues 114-134 show a composition bias toward basic and acidic residues; the sequence is GTEKKKEKPQGQREKKEDSHS. Residue Ser-134 is modified to Phosphoserine; by NEK7. Over residues 137 to 155 the composition is skewed to low complexity; the sequence is QSPQIRASPSPQPSSQPLQ. Ser-144 is modified (phosphoserine; by NEK6). Ser-146 bears the Phosphoserine; by NEK7 mark. A compositionally biased stretch (polar residues) spans 156–168; it reads INRQTPESKSSAP. Ser-171 is modified (phosphoserine). The span at 176-193 shows a compositional bias: basic and acidic residues; sequence PTAEKSHNSWENSDDSRN. Residue Ser-200 is modified to Phosphoserine. Thr-201 carries the phosphothreonine modification. Position 237 is a phosphotyrosine (Tyr-237). A Phosphothreonine modification is found at Thr-248. WD repeat units follow at residues 270-308, 312-359, 367-407, 414-449, 456-495, 511-549, 554-590, 593-632, 636-673, 679-715, 722-761, 771-829, and 836-875; these read LKLE…LFNY, TQRH…VWDS, VIGL…VWDW, AEIK…FWTW, RKQG…IWSK, QINR…LWDH, EREI…LRGT, DGFQ…MWNS, RLEW…VLDA, VSIH…LYTV, YSRY…YWDI, RSDC…LFQY, and APSH…QWKL. The residue at position 620 (Thr-620) is a Phosphothreonine; by NEK6 and NEK7. Residues 887–988 are disordered; it reads ITDASVTKTP…EEERGITPLC (102 aa). Polar residues predominate over residues 890–904; the sequence is ASVTKTPASSSETAR. Phosphoserine occurs at positions 906, 908, and 914. Polar residues predominate over residues 927–939; it reads MGSSPTLVENSLE. The span at 944–953 shows a compositional bias: acidic residues; the sequence is PSEEQSEWGS.

It belongs to the WD repeat EMAP family. In terms of assembly, homotrimer; self-association is mediated by the N-terminal coiled coil. Interacts (via WD repeats) with NUDC. Interacts with alpha- and beta-tubulin during mitosis. Phosphorylated during mitosis. Phosphorylation at Ser-144 and Ser-146 promotes its dissociation from microtubules during mitosis which is required for efficient chromosome congression.

It localises to the cytoplasm. Its subcellular location is the cytoskeleton. The protein resides in the spindle. It is found in the microtubule organizing center. The protein localises to the midbody. Functionally, essential for the stability of microtubules (MTs). Essential for the formation of MTs. Required for the organization of the mitotic spindle and for the proper attachment of kinetochores to MTs. Promotes the recruitment of NUDC to the mitotic spindle for mitotic progression. This is Echinoderm microtubule-associated protein-like 4 (Eml4) from Mus musculus (Mouse).